Here is a 255-residue protein sequence, read N- to C-terminus: Anamorsin homolog (255 aa).

Positions 1 to 163 (MPKETLVVSK…VRPNWKSKTD (163 aa)) are N-terminal SAM-like domain. The segment at 164–185 (KKSPSMIDAAPIDGYISKAPDY) is linker. 4 residues coordinate [2Fe-2S] cluster: C188, C195, C198, and C200. Residues 188 to 200 (CSTKPRACANCTC) are fe-S binding site A. The [4Fe-4S] cluster site is built by C224, C227, C235, and C238. Short sequence motifs (cx2C motif) lie at residues 224 to 227 (CGNC) and 235 to 238 (CESC). A fe-S binding site B region spans residues 224 to 238 (CGNCYLGDAFRCESC).

Belongs to the anamorsin family. In terms of assembly, monomer. [2Fe-2S] cluster is required as a cofactor. [4Fe-4S] cluster serves as cofactor.

The protein resides in the cytoplasm. Its subcellular location is the mitochondrion intermembrane space. Component of the cytosolic iron-sulfur (Fe-S) protein assembly (CIA) machinery. Required for the maturation of extramitochondrial Fe-S proteins. Part of an electron transfer chain functioning in an early step of cytosolic Fe-S biogenesis, facilitating the de novo assembly of a [4Fe-4S] cluster on the cytosolic Fe-S scaffold complex. Electrons are transferred from NADPH via a FAD- and FMN-containing diflavin oxidoreductase. Together with the diflavin oxidoreductase, also required for the assembly of the diferric tyrosyl radical cofactor of ribonucleotide reductase (RNR), probably by providing electrons for reduction during radical cofactor maturation in the catalytic small subunit. The sequence is that of Anamorsin homolog from Theileria annulata.